Here is a 125-residue protein sequence, read N- to C-terminus: Large ribosomal subunit protein bL20 (125 aa).

Belongs to the bacterial ribosomal protein bL20 family.

Binds directly to 23S ribosomal RNA and is necessary for the in vitro assembly process of the 50S ribosomal subunit. It is not involved in the protein synthesizing functions of that subunit. The polypeptide is Large ribosomal subunit protein bL20 (Rhodospirillum rubrum (strain ATCC 11170 / ATH 1.1.1 / DSM 467 / LMG 4362 / NCIMB 8255 / S1)).